Here is a 175-residue protein sequence, read N- to C-terminus: Homeobox expressed in ES cells 1 (175 aa).

The disordered stretch occupies residues 1 to 44 (MSPNLQEGARLVEGKPSSTSFSIESILGLDQKKDDAPSMKPHRP). A DNA-binding region (homeobox) is located at residues 108–167 (GRRPRTAFTQNQVEVLENVFRVNCYPGIDIREDLARKLNLEEDRIQIWFQNRRAKLKRSH).

The protein belongs to the ANF homeobox family. As to quaternary structure, interacts with TLE1.

It localises to the nucleus. Its function is as follows. Required for the normal development of the forebrain, eyes and other anterior structures such as the olfactory placodes and pituitary gland. Possible transcriptional repressor. Binds to the palindromic PIII sequence, 5'-AGCTTGAGTCTAATTGAATTAACTGTAC-3'. The polypeptide is Homeobox expressed in ES cells 1 (HESX1) (Oryctolagus cuniculus (Rabbit)).